Consider the following 943-residue polypeptide: Protein translocase subunit SecA (943 aa).

Residues Gln-90, 108–112 (GEGKT), and Asp-509 contribute to the ATP site. A disordered region spans residues 534-576 (KPDNEHKPPIPQQRSSKAGGGFASKSESISNKNSKSSGASLFP). Over residues 556 to 570 (ASKSESISNKNSKSS) the composition is skewed to low complexity.

The protein belongs to the SecA family. In terms of assembly, monomer and homodimer. Part of the essential Sec protein translocation apparatus which comprises SecA, SecYEG and auxiliary proteins SecDF. Other proteins may also be involved.

The protein resides in the cell inner membrane. The protein localises to the cellular thylakoid membrane. It is found in the cytoplasm. The catalysed reaction is ATP + H2O + cellular proteinSide 1 = ADP + phosphate + cellular proteinSide 2.. Functionally, part of the Sec protein translocase complex. Interacts with the SecYEG preprotein conducting channel. Has a central role in coupling the hydrolysis of ATP to the transfer of proteins into and across the cell membrane, serving as an ATP-driven molecular motor driving the stepwise translocation of polypeptide chains across the membrane. Its function is as follows. Probably participates in protein translocation into and across both the cytoplasmic and thylakoid membranes in cyanobacterial cells. This chain is Protein translocase subunit SecA, found in Prochlorococcus marinus (strain MIT 9515).